A 37-amino-acid polypeptide reads, in one-letter code: Pi-theraphotoxin-Hm3a (37 aa).

Intrachain disulfides connect C3-C18, C10-C23, and C17-C33.

The protein belongs to the psalmotoxin-1 family. In terms of tissue distribution, expressed by the venom gland.

It localises to the secreted. This toxin acts on different isoforms of acid-sensing ion channel ASIC1 in a similar manner to psalmotoxin-1 (AC P60514). On ASIC1a homotrimer, it provokes a pH-dependent inhibition (IC(50)=39.7 nM on human and IC(50)=1.3 nM on rat channels), whereas it potentiates ASIC1b homotrimer and ASIC1a-ASIC1b heterotrimer (EC(50)=178.1 nM on human ASIC1b, EC(50)=46.5 nM on rat ASIC1b and EC(50)=17.4 nM on rat ASIC1a-ASIC1b channels). On rat ASIC1a, it acts by inhibiting channel currents by shifting the pH of half-maximal effect (pH(50)) of steady-state desensitization and activation to more alkaline values. This chain is Pi-theraphotoxin-Hm3a, found in Heteroscodra maculata (Togo starburst tarantula).